The chain runs to 501 residues: Trans-cinnamate 4-monooxygenase (501 aa).

The chain crosses the membrane as a helical span at residues 3–23 (LVLLEKALLGLFAAAVLAVAV). Residues 213–218 (RSRLSQ) and A302 each bind (E)-cinnamate. C443 provides a ligand contact to heme.

This sequence belongs to the cytochrome P450 family. Requires heme as cofactor.

It is found in the membrane. It carries out the reaction (E)-cinnamate + reduced [NADPH--hemoprotein reductase] + O2 = (E)-4-coumarate + oxidized [NADPH--hemoprotein reductase] + H2O + H(+). It participates in phenylpropanoid metabolism; trans-4-coumarate biosynthesis; trans-4-coumarate from trans-cinnamate: step 1/1. In terms of biological role, catalyzes the first oxidative step of the phenylpropanoid pathway in higher plants by transforming trans-cinnamate into p-coumarate. The compounds formed by this pathway are essential components for lignification, pollination, and defense against ultraviolet light, predators and pathogens. Can also use 2-naphthoic acid as substrate. The chain is Trans-cinnamate 4-monooxygenase from Sorghum bicolor (Sorghum).